Here is a 537-residue protein sequence, read N- to C-terminus: Apoptosis inhibitor 5-like protein API5 (537 aa).

The interval Ala9–Ile363 is ARM-like and Heat-like helical repeats. Residues Trp465–Arg537 form a disordered region. Over residues Pro474 to Ala492 the composition is skewed to polar residues.

This sequence belongs to the API5 family. Interacts with AIP1 and AIP2.

The protein localises to the nucleus. Its function is as follows. Putative anti-apoptotic factor involved in the regulation of tapetal programmed cell death (PCD) and degeneration during anther development. Interacts directly with the DEAD-box ATP-dependent RNA helicases AIP1 and AIP2 that form dimers and bind the promoter region of the cysteine protease CP1 involved in tapetum PCD. The protein is Apoptosis inhibitor 5-like protein API5 of Oryza sativa subsp. japonica (Rice).